We begin with the raw amino-acid sequence, 411 residues long: Mitogen-activated protein kinase 8 (411 aa).

The region spanning 26–321 is the Protein kinase domain; that stretch reads YQNLKPIGSG…VDEALQHPYI (296 aa). ATP is bound by residues 32-40 and lysine 55; that span reads IGSGAQGIV. At cysteine 116 the chain carries S-nitrosocysteine; in inhibited form. Residue aspartate 151 is the Proton acceptor of the active site. Threonine 183 carries the phosphothreonine; by MAP2K7 modification. The TXY signature appears at 183–185; it reads TPY. Position 185 is a phosphotyrosine; by MAP2K4 (tyrosine 185). The segment at 368-411 is disordered; the sequence is KNGVIRGQPSPLGAAVINGSQHPVSSPSVNDMSSMSTDPTLASD. Position 377 is a phosphoserine (serine 377). Low complexity predominate over residues 390–403; that stretch reads PVSSPSVNDMSSMS.

The protein belongs to the protein kinase superfamily. CMGC Ser/Thr protein kinase family. MAP kinase subfamily. Forms a complex with MAPK8IP1 and ARHGEF28. Found in a complex with SH3RF1, RAC1, MAP3K11/MLK3, MAP2K7/MKK7 and MAPK8IP1/JIP1. Found in a complex with SH3RF1, RAC2, MAP3K7/TAK1, MAP2K7/MKK7, MAPK8IP1/JIP1 and MAPK9/JNK2. Binds to at least four scaffolding proteins, MAPK8IP1/JIP-1, MAPK8IP2/JIP-2, MAPK8IP3/JIP-3/JSAP1 and SPAG9/MAPK8IP4/JIP-4. These proteins also bind other components of the JNK signaling pathway. Interacts with TP53, WWOX. Interacts with JAMP. Interacts with NFATC4. Interacts (phosphorylated form) with NFE2; the interaction phosphorylates NFE2 in undifferentiated cells. Interacts with MECOM; regulates JNK signaling. Interacts with PIN1; this interaction mediates MAPK8 conformational changes leading to the binding of MAPK8 to its substrates. Interacts with HSF1 (via D domain and preferentially with hyperphosphorylated form); this interaction occurs under both normal growth conditions and immediately upon heat shock. Interacts with STMN2, STMN3 and STMN4. Interacts with GRIPAP1. Interacts with POU5F1; phosphorylates POU5F1 at 'Ser-347'. Interacts with HSF4. Mg(2+) is required as a cofactor. Dually phosphorylated on Thr-183 and Tyr-185 by MAP2K7 and MAP2K4, which activates the enzyme. Phosphorylated by TAOK2. Phosphorylated form is more concentrated at synapses than none-phosphorylated. In terms of processing, nitrosylated upon IFN-gamma-induced endogenous NO production, which inhibits the enzyme. May be phosphorylated at Thr-183 and Tyr-185 by MAP3K1/MEKK1.

It is found in the cytoplasm. The protein localises to the nucleus. Its subcellular location is the synapse. The catalysed reaction is L-seryl-[protein] + ATP = O-phospho-L-seryl-[protein] + ADP + H(+). The enzyme catalyses L-threonyl-[protein] + ATP = O-phospho-L-threonyl-[protein] + ADP + H(+). Its activity is regulated as follows. Activated by threonine and tyrosine phosphorylation by either of two dual specificity kinases, MAP2K4 and MAP2K7. MAP2K4 shows a strong preference for Tyr-185 while MAP2K7 phosphorylates Tyr-183 preferentially. Inhibited by dual specificity phosphatases, such as DUSP1. Inhibited by SERPINB3. Inhibited by IFN-gamma-induced S-nitrosylation. Serine/threonine-protein kinase involved in various processes such as cell proliferation, differentiation, migration, transformation and programmed cell death. Extracellular stimuli such as pro-inflammatory cytokines or physical stress stimulate the stress-activated protein kinase/c-Jun N-terminal kinase (SAP/JNK) signaling pathway. In this cascade, two dual specificity kinases MAP2K4/MKK4 and MAP2K7/MKK7 phosphorylate and activate MAPK8/JNK1. In turn, MAPK8/JNK1 phosphorylates a number of transcription factors, primarily components of AP-1 such as JUN, JDP2 and ATF2 and thus regulates AP-1 transcriptional activity. Phosphorylates the replication licensing factor CDT1, inhibiting the interaction between CDT1 and the histone H4 acetylase HBO1 to replication origins. Loss of this interaction abrogates the acetylation required for replication initiation. Promotes stressed cell apoptosis by phosphorylating key regulatory factors including p53/TP53 and Yes-associates protein YAP1. In T-cells, MAPK8 and MAPK9 are required for polarized differentiation of T-helper cells into Th1 cells. Contributes to the survival of erythroid cells by phosphorylating the antagonist of cell death BAD upon EPO stimulation. Mediates starvation-induced BCL2 phosphorylation, BCL2 dissociation from BECN1, and thus activation of autophagy. Phosphorylates STMN2 and hence regulates microtubule dynamics, controlling neurite elongation in cortical neurons. In the developing brain, through its cytoplasmic activity on STMN2, negatively regulates the rate of exit from multipolar stage and of radial migration from the ventricular zone. Phosphorylates several other substrates including heat shock factor protein 4 (HSF4), the deacetylase SIRT1, ELK1, or the E3 ligase ITCH. Phosphorylates the CLOCK-BMAL1 heterodimer and plays a role in the regulation of the circadian clock. Phosphorylates the heat shock transcription factor HSF1, suppressing HSF1-induced transcriptional activity. Phosphorylates POU5F1, which results in the inhibition of POU5F1's transcriptional activity and enhances its proteasomal degradation. Phosphorylates JUND and this phosphorylation is inhibited in the presence of MEN1. In neurons, phosphorylates SYT4 which captures neuronal dense core vesicles at synapses. Phosphorylates EIF4ENIF1/4-ET in response to oxidative stress, promoting P-body assembly. Phosphorylates SIRT6 in response to oxidative stress, stimulating its mono-ADP-ribosyltransferase activity. Phosphorylates NLRP3, promoting assembly of the NLRP3 inflammasome. Phosphorylates ALKBH5 in response to reactive oxygen species (ROS), promoting ALKBH5 sumoylation and inactivation. The chain is Mitogen-activated protein kinase 8 (Mapk8) from Rattus norvegicus (Rat).